The chain runs to 262 residues: MASSLAPATKAATNLRLTHSLRFSPKPNNLRFATKPGNTLLCTRVKAQLNEVALDSSSNATSPPMKAKSKEEPPAKPLAEPSSSVLATQESVSQFITQVASLVKLVDSRDIVELKLKQHDVEVTIRKKEAMPQPPPAPQPSVVYSPPPPALPPPPVPASTPAPTLARATPTPTSAPAVKSAKSSLPPLKSPMAGTFYRSPAPGEPSFVKVGDKVKKGQVVCIIEAMKLMNEIEADQSGTIVEIVAEDAKSVSVDTPLFVIQP.

The N-terminal 47 residues, 1 to 47 (MASSLAPATKAATNLRLTHSLRFSPKPNNLRFATKPGNTLLCTRVKA), are a transit peptide targeting the chloroplast. Disordered regions lie at residues 53-84 (ALDS…PSSS) and 125-185 (IRKK…KSSL). Positions 132–160 (PQPPPAPQPSVVYSPPPPALPPPPVPAST) are enriched in pro residues. Positions 161-185 (PAPTLARATPTPTSAPAVKSAKSSL) are enriched in low complexity. The Biotinyl-binding domain maps to 185 to 261 (LPPLKSPMAG…SVDTPLFVIQ (77 aa)). Residue Lys-227 is modified to N6-biotinyllysine.

The protein resides in the plastid. It localises to the chloroplast. Its pathway is lipid metabolism; fatty acid biosynthesis. Functionally, this protein is a component of the acetyl coenzyme A carboxylase complex; first, biotin carboxylase catalyzes the carboxylation of the carrier protein and then the transcarboxylase transfers the carboxyl group to form malonyl-CoA. The sequence is that of Biotin carboxyl carrier protein of acetyl-CoA carboxylase, chloroplastic (ACCB-1) from Glycine max (Soybean).